A 54-amino-acid chain; its full sequence is MLHYSVIFFVIALIAAFFGFSGIAAGAAEIAKILFFVFLIITIVSLVAGIFHKR.

A run of 2 helical transmembrane segments spans residues Val6–Gly26 and Ile30–Ile50.

Belongs to the UPF0391 family.

The protein resides in the cell membrane. This Methylobacillus flagellatus (strain ATCC 51484 / DSM 6875 / VKM B-1610 / KT) protein is UPF0391 membrane protein Mfla_0947/Mfla_1091.